We begin with the raw amino-acid sequence, 963 residues long: Protein translocase subunit SecA (963 aa).

Residues Q87, 105–109 (GEGKT), and D512 contribute to the ATP site. 2 disordered regions span residues 868 to 909 (GPVM…EDFT) and 924 to 963 (QFVG…CHGS). Positions 874 to 886 (PDEEEDGDEDSVE) are enriched in acidic residues. Residues C949, C951, C960, and H961 each contribute to the Zn(2+) site.

The protein belongs to the SecA family. As to quaternary structure, monomer and homodimer. Part of the essential Sec protein translocation apparatus which comprises SecA, SecYEG and auxiliary proteins SecDF. Other proteins may also be involved. It depends on Zn(2+) as a cofactor.

The protein localises to the cell inner membrane. Its subcellular location is the cytoplasm. It carries out the reaction ATP + H2O + cellular proteinSide 1 = ADP + phosphate + cellular proteinSide 2.. Its function is as follows. Part of the Sec protein translocase complex. Interacts with the SecYEG preprotein conducting channel. Has a central role in coupling the hydrolysis of ATP to the transfer of proteins into and across the cell membrane, serving as an ATP-driven molecular motor driving the stepwise translocation of polypeptide chains across the membrane. The chain is Protein translocase subunit SecA from Solibacter usitatus (strain Ellin6076).